A 213-amino-acid polypeptide reads, in one-letter code: Probable nicotinate-nucleotide adenylyltransferase (213 aa).

Belongs to the NadD family.

It catalyses the reaction nicotinate beta-D-ribonucleotide + ATP + H(+) = deamido-NAD(+) + diphosphate. Its pathway is cofactor biosynthesis; NAD(+) biosynthesis; deamido-NAD(+) from nicotinate D-ribonucleotide: step 1/1. Functionally, catalyzes the reversible adenylation of nicotinate mononucleotide (NaMN) to nicotinic acid adenine dinucleotide (NaAD). The protein is Probable nicotinate-nucleotide adenylyltransferase of Trichlorobacter lovleyi (strain ATCC BAA-1151 / DSM 17278 / SZ) (Geobacter lovleyi).